Reading from the N-terminus, the 607-residue chain is Glutamine--fructose-6-phosphate aminotransferase [isomerizing] (607 aa).

Catalysis depends on C2, which acts as the Nucleophile; for GATase activity. Positions C2 to D218 constitute a Glutamine amidotransferase type-2 domain. SIS domains lie at F280–K424 and I457–P597. Residue K602 is the For Fru-6P isomerization activity of the active site.

Homodimer.

It localises to the cytoplasm. The enzyme catalyses D-fructose 6-phosphate + L-glutamine = D-glucosamine 6-phosphate + L-glutamate. Catalyzes the first step in hexosamine metabolism, converting fructose-6P into glucosamine-6P using glutamine as a nitrogen source. The chain is Glutamine--fructose-6-phosphate aminotransferase [isomerizing] from Fusobacterium nucleatum subsp. nucleatum (strain ATCC 25586 / DSM 15643 / BCRC 10681 / CIP 101130 / JCM 8532 / KCTC 2640 / LMG 13131 / VPI 4355).